We begin with the raw amino-acid sequence, 206 residues long: MKESVQEIIQQLIHSVDLQSSKFQLAIVCTMFNPIFWNIVARMEYHKHSLTKMCGGARKGCYMLAATIFSLGIVRDMVYESALREQPTCSLITGENWTKLGVALFGLGQVLVLSSMYKLGITGTYLGDYFGILMDERVTGFPFNVSNNPMYQGSTLSFLGIALYKGKPAGLVVSAVVYFMYKIALRWEEPFTAMIYANRDKAKKNM.

Residues 1 to 20 lie on the Lumenal side of the membrane; that stretch reads MKESVQEIIQQLIHSVDLQS. The segment at residues 21-41 is an intramembrane region (helical); the sequence is SKFQLAIVCTMFNPIFWNIVA. Residues 42–53 lie on the Lumenal side of the membrane; it reads RMEYHKHSLTKM. Residues 54 to 74 traverse the membrane as a helical segment; the sequence is CGGARKGCYMLAATIFSLGIV. Residues 75–101 are Cytoplasmic-facing; it reads RDMVYESALREQPTCSLITGENWTKLG. A helical membrane pass occupies residues 102 to 122; that stretch reads VALFGLGQVLVLSSMYKLGIT. S-adenosyl-L-methionine is bound at residue 106–108; it reads GLG. Topologically, residues 123 to 165 are lumenal; the sequence is GTYLGDYFGILMDERVTGFPFNVSNNPMYQGSTLSFLGIALYK. A helical membrane pass occupies residues 166-186; it reads GKPAGLVVSAVVYFMYKIALR. At 187-206 the chain is on the cytoplasmic side; it reads WEEPFTAMIYANRDKAKKNM. Residue 188-189 coordinates S-adenosyl-L-methionine; it reads EE.

The protein belongs to the class VI-like SAM-binding methyltransferase superfamily. PEMT/PEM2 methyltransferase family.

The protein localises to the endoplasmic reticulum membrane. It localises to the mitochondrion membrane. The enzyme catalyses a 1,2-diacyl-sn-glycero-3-phosphoethanolamine + S-adenosyl-L-methionine = a 1,2-diacyl-sn-glycero-3-phospho-N-methylethanolamine + S-adenosyl-L-homocysteine + H(+). The catalysed reaction is a 1,2-diacyl-sn-glycero-3-phospho-N-methylethanolamine + S-adenosyl-L-methionine = a 1,2-diacyl-sn-glycero-3-phospho-N,N-dimethylethanolamine + S-adenosyl-L-homocysteine + H(+). It catalyses the reaction a 1,2-diacyl-sn-glycero-3-phospho-N,N-dimethylethanolamine + S-adenosyl-L-methionine = a 1,2-diacyl-sn-glycero-3-phosphocholine + S-adenosyl-L-homocysteine + H(+). The protein operates within phospholipid metabolism; phosphatidylcholine biosynthesis. In terms of biological role, catalyzes the second two steps of the methylation pathway of phosphatidylcholine biosynthesis, the SAM-dependent methylation of phosphatidylmonomethylethanolamine (PMME) to phosphatidyldimethylethanolamine (PDME) and of PDME to phosphatidylcholine (PC). Can also catalyze the first methylation reaction of PE to PMME in the absence of PE methyltransferase CHO2. In Saccharomyces cerevisiae (strain ATCC 204508 / S288c) (Baker's yeast), this protein is Phosphatidyl-N-methylethanolamine N-methyltransferase.